The following is a 404-amino-acid chain: Cytochrome b (404 aa).

A run of 4 helical transmembrane segments spans residues 35 to 55 (FGSLAGLCLVIQILTGVFLAM), 79 to 101 (WLLRYMHANGASMFFIVVYLHFF), 116 to 136 (VWCLGVVILLLMIVTAFIGYV), and 182 to 202 (FFSLHYLLPFIIAGASILHLA). 2 residues coordinate heme b: histidine 85 and histidine 99. Residues histidine 186 and histidine 200 each contribute to the heme b site. An a ubiquinone-binding site is contributed by histidine 205. Transmembrane regions (helical) follow at residues 228-248 (IYVKDLVGWVAFAIFFSIFVF), 292-312 (LGGVAAIGLVFVSLLALPFIN), 324-344 (IHQKFFWLLVADCLLLGWIGC), and 351-370 (YVTIGQIASVGFFFYFAITP).

It belongs to the cytochrome b family. In terms of assembly, the main subunits of complex b-c1 are: cytochrome b, cytochrome c1 and the Rieske protein. It depends on heme b as a cofactor.

Its subcellular location is the mitochondrion inner membrane. Component of the ubiquinol-cytochrome c reductase complex (complex III or cytochrome b-c1 complex) that is part of the mitochondrial respiratory chain. The b-c1 complex mediates electron transfer from ubiquinol to cytochrome c. Contributes to the generation of a proton gradient across the mitochondrial membrane that is then used for ATP synthesis. In Marchantia polymorpha (Common liverwort), this protein is Cytochrome b (MT-CYB).